Here is a 365-residue protein sequence, read N- to C-terminus: Phospho-N-acetylmuramoyl-pentapeptide-transferase (365 aa).

The next 10 membrane-spanning stretches (helical) occupy residues Y22 to G42, T74 to L94, T95 to F115, K134 to S154, S168 to G188, G201 to E221, L240 to F260, V267 to M287, L292 to V312, and K342 to I362.

The protein belongs to the glycosyltransferase 4 family. MraY subfamily. Mg(2+) serves as cofactor.

The protein localises to the cell inner membrane. It catalyses the reaction UDP-N-acetyl-alpha-D-muramoyl-L-alanyl-gamma-D-glutamyl-meso-2,6-diaminopimeloyl-D-alanyl-D-alanine + di-trans,octa-cis-undecaprenyl phosphate = di-trans,octa-cis-undecaprenyl diphospho-N-acetyl-alpha-D-muramoyl-L-alanyl-D-glutamyl-meso-2,6-diaminopimeloyl-D-alanyl-D-alanine + UMP. It participates in cell wall biogenesis; peptidoglycan biosynthesis. Catalyzes the initial step of the lipid cycle reactions in the biosynthesis of the cell wall peptidoglycan: transfers peptidoglycan precursor phospho-MurNAc-pentapeptide from UDP-MurNAc-pentapeptide onto the lipid carrier undecaprenyl phosphate, yielding undecaprenyl-pyrophosphoryl-MurNAc-pentapeptide, known as lipid I. In Francisella tularensis subsp. mediasiatica (strain FSC147), this protein is Phospho-N-acetylmuramoyl-pentapeptide-transferase.